Here is a 214-residue protein sequence, read N- to C-terminus: Ribosomal RNA small subunit methyltransferase G (214 aa).

Residues G81, M86, 132–133 (VE), and R147 each bind S-adenosyl-L-methionine.

Belongs to the methyltransferase superfamily. RNA methyltransferase RsmG family.

It localises to the cytoplasm. It catalyses the reaction guanosine(527) in 16S rRNA + S-adenosyl-L-methionine = N(7)-methylguanosine(527) in 16S rRNA + S-adenosyl-L-homocysteine. Specifically methylates the N7 position of guanine in position 527 of 16S rRNA. This is Ribosomal RNA small subunit methyltransferase G from Pseudomonas aeruginosa (strain LESB58).